Reading from the N-terminus, the 121-residue chain is Fluoride-specific ion channel FluC 3 (121 aa).

4 helical membrane-spanning segments follow: residues 3 to 23 (VFLP…RYLL), 40 to 60 (FTIN…ALGG), 69 to 89 (VLAT…NEMV), and 101 to 121 (AAYL…GFLV). Na(+) is bound by residues G76 and S79.

Belongs to the fluoride channel Fluc/FEX (TC 1.A.43) family.

The protein resides in the cell membrane. The enzyme catalyses fluoride(in) = fluoride(out). Na(+) is not transported, but it plays an essential structural role and its presence is essential for fluoride channel function. In terms of biological role, fluoride-specific ion channel. Important for reducing fluoride concentration in the cell, thus reducing its toxicity. The protein is Fluoride-specific ion channel FluC 3 of Bifidobacterium longum (strain NCC 2705).